The sequence spans 514 residues: ATP synthase subunit alpha (514 aa).

Residue 170–177 (GDRQIGKT) participates in ATP binding.

It belongs to the ATPase alpha/beta chains family. As to quaternary structure, F-type ATPases have 2 components, CF(1) - the catalytic core - and CF(0) - the membrane proton channel. CF(1) has five subunits: alpha(3), beta(3), gamma(1), delta(1), epsilon(1). CF(0) has three main subunits: a(1), b(2) and c(9-12). The alpha and beta chains form an alternating ring which encloses part of the gamma chain. CF(1) is attached to CF(0) by a central stalk formed by the gamma and epsilon chains, while a peripheral stalk is formed by the delta and b chains.

It localises to the cell inner membrane. The enzyme catalyses ATP + H2O + 4 H(+)(in) = ADP + phosphate + 5 H(+)(out). Its function is as follows. Produces ATP from ADP in the presence of a proton gradient across the membrane. The alpha chain is a regulatory subunit. The protein is ATP synthase subunit alpha of Pseudomonas putida (strain ATCC 700007 / DSM 6899 / JCM 31910 / BCRC 17059 / LMG 24140 / F1).